The primary structure comprises 68 residues: Large ribosomal subunit protein uL30 (68 aa).

It belongs to the universal ribosomal protein uL30 family. As to quaternary structure, part of the 50S ribosomal subunit.

This chain is Large ribosomal subunit protein uL30, found in Agrobacterium fabrum (strain C58 / ATCC 33970) (Agrobacterium tumefaciens (strain C58)).